Consider the following 304-residue polypeptide: ATP phosphoribosyltransferase (304 aa).

Belongs to the ATP phosphoribosyltransferase family. Long subfamily. The cofactor is Mg(2+).

The protein resides in the cytoplasm. The catalysed reaction is 1-(5-phospho-beta-D-ribosyl)-ATP + diphosphate = 5-phospho-alpha-D-ribose 1-diphosphate + ATP. It functions in the pathway amino-acid biosynthesis; L-histidine biosynthesis; L-histidine from 5-phospho-alpha-D-ribose 1-diphosphate: step 1/9. Feedback inhibited by histidine. In terms of biological role, catalyzes the condensation of ATP and 5-phosphoribose 1-diphosphate to form N'-(5'-phosphoribosyl)-ATP (PR-ATP). Has a crucial role in the pathway because the rate of histidine biosynthesis seems to be controlled primarily by regulation of HisG enzymatic activity. This is ATP phosphoribosyltransferase from Xanthomonas euvesicatoria pv. vesicatoria (strain 85-10) (Xanthomonas campestris pv. vesicatoria).